We begin with the raw amino-acid sequence, 1092 residues long: Probable arabinosyltransferase A (1092 aa).

13 helical membrane-spanning segments follow: residues 21–43 (IARL…VPLL), 214–233 (AVMV…LALL), 249–271 (GLWT…IVGA), 324–346 (VWMR…RCVL), 353–372 (VAAN…AAWL), 382–399 (PLIA…ENSI), 404–426 (LWPA…QGLI), 517–534 (FAVL…MVLL), 541–563 (GAVS…LLIL), 568–590 (WAIQ…AFAF), 602–624 (ALYV…GWFY), 639–661 (IAHY…LAGW), and 682–704 (ALAS…GSMV). Residues 772–798 (PSGVSEHLEPEPVGTNPGTPNSEGPVD) form a disordered region.

The protein belongs to the emb family.

The protein localises to the cell membrane. Functionally, arabinosyl transferase responsible for the polymerization of arabinose into the arabinan of arabinogalactan. This is Probable arabinosyltransferase A (embA) from Mycolicibacterium smegmatis (Mycobacterium smegmatis).